A 227-amino-acid polypeptide reads, in one-letter code: MKQHIKNLPIILASSSLTRVELLDRIKIIPAQIIPADIDETPNLRELPAPLAIRLAYGKAIKVASQIEKSSIIIAADTVAAVGRRILPKATTYEEVKHCIKMVSGRRHRVYTGLCIIKKENNQLTFRQKIVQTIIKFKKLSDEEINFYSSLDEGIDKAGGCKISGYAEAFISFISGSYSNIMGLPLFETVNALTSLGFRYSDNTANVCKDLSTKSMVQNHFGKPSIS.

The Proton acceptor role is filled by D77.

It belongs to the Maf family. A divalent metal cation serves as cofactor.

The protein localises to the cytoplasm. It catalyses the reaction a ribonucleoside 5'-triphosphate + H2O = a ribonucleoside 5'-phosphate + diphosphate + H(+). The enzyme catalyses a 2'-deoxyribonucleoside 5'-triphosphate + H2O = a 2'-deoxyribonucleoside 5'-phosphate + diphosphate + H(+). Functionally, nucleoside triphosphate pyrophosphatase. May have a dual role in cell division arrest and in preventing the incorporation of modified nucleotides into cellular nucleic acids. The chain is Nucleoside triphosphate pyrophosphatase from Rickettsia typhi (strain ATCC VR-144 / Wilmington).